The following is a 542-amino-acid chain: Sialate O-acetylesterase (542 aa).

An N-terminal signal peptide occupies residues 1–23; the sequence is MVSPRPVGLMLLLIIARVSRGAG. N-linked (GlcNAc...) asparagine glycosylation is found at Asn-107, Asn-138, Asn-188, Asn-294, Asn-357, Asn-428, Asn-449, and Asn-463.

In terms of assembly, disulfide-linked heterodimer of a small subunit and a large subunit. The two subunits are derived from a single precursor by proteolytic cleavage. Post-translationally, glycosylated. As to expression, widely expressed.

Its subcellular location is the lysosome. It catalyses the reaction N-acetyl-9-O-acetylneuraminate + H2O = N-acetylneuraminate + acetate + H(+). The enzyme catalyses an Ac-O-9-sialoglycoconjugate + H2O = a sialoglycoconjugate + acetate + H(+). Its activity is regulated as follows. Inhibited by diisopropyl fluorophosphate and diethyl-P-nitrophenyl phosphate. Its function is as follows. Catalyzes the removal of O-acetyl ester groups from position 9 of the free diacetylated sialate N-acetyl-9-O-acetylneuraminate (Neu5,9Ac2) in the cytosol and of the diacetylated sialate residues of sialylglycoconjugates in the lysosomes. Together with the sialate-O-acetyltransferase they regulate the balance of acetylated sialoglycoconjugates, key players in various processes such as cell-cell interactions, host-pathogen recognition, and tumor antigenicity. This is Sialate O-acetylesterase (Siae) from Rattus norvegicus (Rat).